The sequence spans 303 residues: S-methyl-5'-thioadenosine phosphorylase 1 (303 aa).

Phosphate is bound by residues Ser14, 57–58 (RH), and 90–91 (SA). Met198 contacts substrate. Ser199 serves as a coordination point for phosphate. Substrate is bound at residue 222–224 (DYD).

It belongs to the PNP/MTAP phosphorylase family. MTAP subfamily. As to quaternary structure, homotrimer.

The protein localises to the cytoplasm. It is found in the nucleus. The enzyme catalyses S-methyl-5'-thioadenosine + phosphate = 5-(methylsulfanyl)-alpha-D-ribose 1-phosphate + adenine. The protein operates within amino-acid biosynthesis; L-methionine biosynthesis via salvage pathway; S-methyl-5-thio-alpha-D-ribose 1-phosphate from S-methyl-5'-thioadenosine (phosphorylase route): step 1/1. Functionally, catalyzes the reversible phosphorylation of S-methyl-5'-thioadenosine (MTA) to adenine and 5-methylthioribose-1-phosphate. Involved in the breakdown of MTA, a major by-product of polyamine biosynthesis. Responsible for the first step in the methionine salvage pathway after MTA has been generated from S-adenosylmethionine. Has broad substrate specificity with 6-aminopurine nucleosides as preferred substrates. This chain is S-methyl-5'-thioadenosine phosphorylase 1, found in Puccinia graminis f. sp. tritici (strain CRL 75-36-700-3 / race SCCL) (Black stem rust fungus).